The primary structure comprises 809 residues: Trimethylamine-N-oxide reductase 2 (809 aa).

Positions 1-31 (MTLTRREFIKHSGIAAGALVVTSAAPLPAWA) form a signal peptide, tat-type signal. S176 contributes to the Mo-bis(molybdopterin guanine dinucleotide) binding site.

The protein belongs to the prokaryotic molybdopterin-containing oxidoreductase family. It depends on Mo-bis(molybdopterin guanine dinucleotide) as a cofactor. In terms of processing, predicted to be exported by the Tat system. The position of the signal peptide cleavage has not been experimentally proven.

Its subcellular location is the periplasm. It catalyses the reaction trimethylamine + 2 Fe(III)-[cytochrome c] + H2O = trimethylamine N-oxide + 2 Fe(II)-[cytochrome c] + 3 H(+). Reduces trimethylamine-N-oxide (TMAO) into trimethylamine; an anaerobic reaction coupled to energy-yielding reactions. Can also reduce other N- and S-oxide compounds such as 4-methylmorpholine-N-oxide and biotin sulfoxide (BSO), but with a lower catalytic efficiency. In Escherichia coli O157:H7, this protein is Trimethylamine-N-oxide reductase 2 (torZ).